We begin with the raw amino-acid sequence, 691 residues long: Glycine--tRNA ligase beta subunit (691 aa).

Belongs to the class-II aminoacyl-tRNA synthetase family. As to quaternary structure, tetramer of two alpha and two beta subunits.

Its subcellular location is the cytoplasm. It catalyses the reaction tRNA(Gly) + glycine + ATP = glycyl-tRNA(Gly) + AMP + diphosphate. This Levilactobacillus brevis (strain ATCC 367 / BCRC 12310 / CIP 105137 / JCM 1170 / LMG 11437 / NCIMB 947 / NCTC 947) (Lactobacillus brevis) protein is Glycine--tRNA ligase beta subunit.